The following is a 199-amino-acid chain: Thymidine kinase (199 aa).

Residues 15–22 and 88–91 contribute to the ATP site; these read GSMFSGKS and DEIQ. The Proton acceptor role is filled by Glu-89. 4 residues coordinate Zn(2+): Cys-145, Cys-148, Cys-183, and His-186.

Belongs to the thymidine kinase family. Homotetramer.

It is found in the cytoplasm. It carries out the reaction thymidine + ATP = dTMP + ADP + H(+). The chain is Thymidine kinase from Staphylococcus haemolyticus (strain JCSC1435).